The sequence spans 750 residues: Photosystem I P700 chlorophyll a apoprotein A1 (750 aa).

Transmembrane regions (helical) follow at residues 70–93 (VFSA…FHGA), 156–179 (LYCT…FHYH), 195–219 (LNHH…HVSL), 291–309 (IAHH…GHMY), 346–369 (WHAQ…HHMY), 385–411 (LSLF…IFMV), 433–455 (AIIS…LYIH), and 531–549 (FLVH…LILL). [4Fe-4S] cluster-binding residues include C573 and C582. A run of 2 helical transmembrane segments spans residues 589-610 (HVFL…HFSW) and 664-686 (LSAY…MFLF). H675 contacts chlorophyll a'. M683 and Y691 together coordinate chlorophyll a. W692 provides a ligand contact to phylloquinone. The helical transmembrane segment at 724 to 744 (AVGVTHYLLGGIATTWAFFLA) threads the bilayer.

Belongs to the PsaA/PsaB family. As to quaternary structure, the PsaA/B heterodimer binds the P700 chlorophyll special pair and subsequent electron acceptors. PSI consists of a core antenna complex that captures photons, and an electron transfer chain that converts photonic excitation into a charge separation. The eukaryotic PSI reaction center is composed of at least 11 subunits. Requires P700 is a chlorophyll a/chlorophyll a' dimer, A0 is one or more chlorophyll a, A1 is one or both phylloquinones and FX is a shared 4Fe-4S iron-sulfur center. as cofactor.

It localises to the plastid. The protein resides in the chloroplast thylakoid membrane. The catalysed reaction is reduced [plastocyanin] + hnu + oxidized [2Fe-2S]-[ferredoxin] = oxidized [plastocyanin] + reduced [2Fe-2S]-[ferredoxin]. Functionally, psaA and PsaB bind P700, the primary electron donor of photosystem I (PSI), as well as the electron acceptors A0, A1 and FX. PSI is a plastocyanin-ferredoxin oxidoreductase, converting photonic excitation into a charge separation, which transfers an electron from the donor P700 chlorophyll pair to the spectroscopically characterized acceptors A0, A1, FX, FA and FB in turn. Oxidized P700 is reduced on the lumenal side of the thylakoid membrane by plastocyanin. This is Photosystem I P700 chlorophyll a apoprotein A1 from Saccharum hybrid (Sugarcane).